A 115-amino-acid polypeptide reads, in one-letter code: Holo-[acyl-carrier-protein] synthase (115 aa).

Mg(2+)-binding residues include D8 and E50.

Belongs to the P-Pant transferase superfamily. AcpS family. Mg(2+) is required as a cofactor.

The protein localises to the cytoplasm. The enzyme catalyses apo-[ACP] + CoA = holo-[ACP] + adenosine 3',5'-bisphosphate + H(+). Transfers the 4'-phosphopantetheine moiety from coenzyme A to a Ser of acyl-carrier-protein. This chain is Holo-[acyl-carrier-protein] synthase, found in Arthrobacter sp. (strain FB24).